The sequence spans 729 residues: Zorya protein ZorA (729 aa).

The next 3 membrane-spanning stretches (helical) occupy residues 20 to 40, 135 to 155, and 177 to 197; these read PATV…FYFF, LPGI…MIGL, and VLYA…ITWL.

The protein belongs to the MotA family.

Its subcellular location is the cell inner membrane. Functionally, component of antiviral defense system Zorya type I, composed of ZorA, ZorB, ZorC and ZorD. Expression of Zorya type I in E.coli (strain MG1655) confers 10,000-fold resistance to phage SECphi27, 100-fold resistance to lambda, and 10-fold resistance to T7. While most T7 infected Zorya-containing cells undergo abortive infection, a minority produce viable phage progeny. These eventually accumulate to a high multiplicity of infection, leading to culture collapse by 2 hours after initial infection. ZorA and ZorB probably assemble in the cell inner membrane and exert their effect there. In Escherichia coli O139:H28 (strain E24377A / ETEC), this protein is Zorya protein ZorA.